The following is a 96-amino-acid chain: NADH-ubiquinone oxidoreductase chain 4L (96 aa).

The next 3 membrane-spanning stretches (helical) occupy residues 1–21 (MELMKMTLYTTFMITIIALSL), 27–47 (MLALMCVETMMLIVFTMLVMF), and 61–81 (IILLTISVCGAAVGLSLVVAI).

It belongs to the complex I subunit 4L family.

It localises to the mitochondrion membrane. The catalysed reaction is a ubiquinone + NADH + 5 H(+)(in) = a ubiquinol + NAD(+) + 4 H(+)(out). Core subunit of the mitochondrial membrane respiratory chain NADH dehydrogenase (Complex I) which catalyzes electron transfer from NADH through the respiratory chain, using ubiquinone as an electron acceptor. Part of the enzyme membrane arm which is embedded in the lipid bilayer and involved in proton translocation. This Lycodon semicarinatus (Ryukyu odd-tooth snake) protein is NADH-ubiquinone oxidoreductase chain 4L (MT-ND4L).